The chain runs to 414 residues: Dothistromin biosynthesis peroxidase dotB (414 aa).

An N-terminal signal peptide occupies residues 1–18; that stretch reads MHFFSAIVLTCLASTAVA. A heme-binding site is contributed by Cys72. N-linked (GlcNAc...) asparagine glycosylation is found at Asn187, Asn241, and Asn328.

This sequence belongs to the chloroperoxidase family. Requires heme b as cofactor.

The protein operates within mycotoxin biosynthesis. Peroxidase; part of the fragmented gene cluster that mediates the biosynthesis of dothistromin (DOTH), a polyketide toxin very similar in structure to the aflatoxin precursor, versicolorin B. The first step of the pathway is the conversion of acetate to norsolorinic acid (NOR) and requires the fatty acid synthase subunits hexA and hexB, as well as the polyketide synthase pksA. PksA combines a hexanoyl starter unit and 7 malonyl-CoA extender units to synthesize the precursor NOR. The hexanoyl starter unit is provided to the acyl-carrier protein (ACP) domain by the fungal fatty acid synthase hexA/hexB. The second step is the conversion of NOR to averantin (AVN) and requires the norsolorinic acid ketoreductase nor1, which catalyzes the dehydration of norsolorinic acid to form (1'S)-averantin. The cytochrome P450 monooxygenase avnA then catalyzes the hydroxylation of AVN to 5'hydroxyaverantin (HAVN). The next step is performed by adhA that transforms HAVN to averufin (AVF). Averufin might then be converted to hydroxyversicolorone by cypX and avfA. Hydroxyversicolorone is further converted versiconal hemiacetal acetate (VHA) by moxY. VHA is then the substrate for the versiconal hemiacetal acetate esterase est1 to yield versiconal (VAL). Versicolorin B synthase vbsA then converts VAL to versicolorin B (VERB) by closing the bisfuran ring. Then, the activity of the versicolorin B desaturase verB leads to versicolorin A (VERA). DotB, a predicted chloroperoxidase, may perform epoxidation of the A-ring of VERA. Alternatively, a cytochrome P450, such as cypX or avnA could catalyze this step. It is also possible that another, uncharacterized, cytochrome P450 enzyme is responsible for this step. Opening of the epoxide could potentially be achieved by the epoxide hydrolase epoA. However, epoA seems not to be required for DOTH biosynthesis, but other epoxide hydrolases may have the ability to complement this hydrolysis. Alternatively, opening of the epoxide ring could be achieved non-enzymatically. The next step is the deoxygenation of ring A to yield the 5,8-dihydroxyanthraquinone which is most likely catalyzed by the NADPH dehydrogenase encoded by ver1. The last stages of DOTH biosynthesis are proposed to involve hydroxylation of the bisfuran. OrdB and norB might have oxidative roles here. An alternative possibility is that cytochrome P450 monoogenases such as avnA and cypX might perform these steps in addition to previously proposed steps. The polypeptide is Dothistromin biosynthesis peroxidase dotB (Dothistroma septosporum (Red band needle blight fungus)).